Here is a 62-residue protein sequence, read N- to C-terminus: Large ribosomal subunit protein bL35 (62 aa).

The tract at residues 25-62 (EQAYRSHLSQNKTTKQKRQARKSVQMHSSDVKRFKALI) is disordered. A compositionally biased stretch (basic and acidic residues) spans 53–62 (SDVKRFKALI).

The protein belongs to the bacterial ribosomal protein bL35 family.

The polypeptide is Large ribosomal subunit protein bL35 (Mycoplasmopsis fermentans (Mycoplasma fermentans)).